The chain runs to 486 residues: Putative protease Do-like 13 (486 aa).

The serine protease stretch occupies residues 44–229; it reads KINTFSSKPN…IPAPVVKHFI (186 aa). Residues His83, Asp114, and Ser192 each act as charge relay system in the active site. The PDZ domain occupies 241–334; the sequence is FCSLNLSYQH…TILLKILREG (94 aa).

Belongs to the peptidase S1C family.

Functionally, putative serine protease. The polypeptide is Putative protease Do-like 13 (DEGP13) (Arabidopsis thaliana (Mouse-ear cress)).